The sequence spans 745 residues: Catalase-peroxidase (745 aa).

Positions 97 to 223 (WHSAGTYRTG…LAAVQMGLIY (127 aa)) form a cross-link, tryptophyl-tyrosyl-methioninium (Trp-Tyr) (with M-249). Catalysis depends on H98, which acts as the Proton acceptor. The segment at residues 223–249 (YVNPEGPDGSPDPWASARDIRMTFARM) is a cross-link (tryptophyl-tyrosyl-methioninium (Tyr-Met) (with W-97)). A heme b-binding site is contributed by H264. Residues 345-368 (KQWQPVNPKPEDLAPGAHSPDRRV) are disordered.

The protein belongs to the peroxidase family. Peroxidase/catalase subfamily. As to quaternary structure, homodimer or homotetramer. The cofactor is heme b. Formation of the three residue Trp-Tyr-Met cross-link is important for the catalase, but not the peroxidase activity of the enzyme.

The catalysed reaction is H2O2 + AH2 = A + 2 H2O. The enzyme catalyses 2 H2O2 = O2 + 2 H2O. Bifunctional enzyme with both catalase and broad-spectrum peroxidase activity. This Phenylobacterium zucineum (strain HLK1) protein is Catalase-peroxidase.